A 113-amino-acid polypeptide reads, in one-letter code: Molt-inhibiting hormone (113 aa).

Residues 1-35 (MMSLAHSKFSCQRTRLLAVVLLAALWSSSLQQAAA) form the signal peptide. Cystine bridges form between cysteine 42–cysteine 79, cysteine 59–cysteine 75, and cysteine 62–cysteine 88.

Belongs to the arthropod CHH/MIH/GIH/VIH hormone family.

It is found in the secreted. Inhibits Y-organs where molting hormone (ecdysteroid) is secreted. A molting cycle is initiated when MIH secretion diminishes or stops. This is Molt-inhibiting hormone from Callinectes sapidus (Blue crab).